The primary structure comprises 118 residues: UPF0102 protein ROP_66030 (118 aa).

The protein belongs to the UPF0102 family.

The sequence is that of UPF0102 protein ROP_66030 from Rhodococcus opacus (strain B4).